We begin with the raw amino-acid sequence, 463 residues long: Proton-coupled folate transporter (463 aa).

At 1–27 (MVSPDDSPEIRDRPRPRRCLLPASVTV) the chain is on the cytoplasmic side. A helical membrane pass occupies residues 28-46 (EPVIFLSMFALALQGPLAT). The Extracellular portion of the chain corresponds to 47-86 (QYLWDRLSADIGFNGTRTVGCAMNGSKSAGPEQQEVETLT). 2 N-linked (GlcNAc...) asparagine glycosylation sites follow: Asn60 and Asn70. Cys67 and Cys302 are disulfide-bonded. Residues 87 to 112 (AHWSLYINLGGFLVGLFSVMLLGPWS) form a helical membrane-spanning segment. The Cytoplasmic segment spans residues 113-116 (DKVG). Residues 117-139 (RRPVLMLPCIGLALQAAVYLLVM) form a helical membrane-spanning segment. The Extracellular segment spans residues 140 to 144 (YQELH). Residues 145–158 (VGYFLIGRFISGIS) traverse the membrane as a helical segment. Residues 159-181 (GDFNMILAGCFAYIADVSDRQSR) are Cytoplasmic-facing. H(+) contacts are provided by Asp160 and Glu189. A helical transmembrane segment spans residues 182 to 207 (TFRVAVLEACLGIAGMVASIIGGHWR). Over 208-212 (KAQGY) the chain is Extracellular. The helical transmembrane segment at 213–231 (INPFWLVFAVNLFTALYVY) threads the bilayer. The Cytoplasmic segment spans residues 232 to 270 (FCVEESVKDKKPARLFTHRHYQSFFRLFTVQGENNRRRK). Residues 271–293 (LFLYSLALLVVVTVHMGAKNLFV) traverse the membrane as a helical segment. Residue His285 participates in H(+) binding. The Extracellular segment spans residues 294 to 306 (LYELSYPLCWDSD). A helical transmembrane segment spans residues 307 to 329 (LIGYGSAAEHLTYLSSLAGLRLF). Residues 330–335 (QLCLAD) are Cytoplasmic-facing. The chain crosses the membrane as a helical span at residues 336–355 (SWVAEMGFISNISGLVVISL). Topologically, residues 356 to 359 (ASTT) are extracellular. Residues 360–380 (PIMFTGYGLRFFAMATTPVIR) traverse the membrane as a helical segment. Over 381 to 392 (SKLSKMVEEGEQ) the chain is Cytoplasmic. A helical transmembrane segment spans residues 393–418 (GALFSSVACVEGLSFLLATGLFNSLY). Residues 419 to 426 (PATLHFMK) are Extracellular-facing. A helical membrane pass occupies residues 427 to 445 (GFPFLLGALLLLIPAGIIG). Residues 446-463 (LIEVCEQKPMYSQFSEIS) are Cytoplasmic-facing.

Belongs to the major facilitator superfamily. SLC46A family. In terms of assembly, monomer.

Its subcellular location is the cell membrane. The protein localises to the apical cell membrane. The protein resides in the basolateral cell membrane. It localises to the endosome membrane. It is found in the cytoplasm. It carries out the reaction folate(in) + H(+)(in) = folate(out) + H(+)(out). The enzyme catalyses (6S)-5-methyl-5,6,7,8-tetrahydrofolate(in) + H(+)(in) = (6S)-5-methyl-5,6,7,8-tetrahydrofolate(out) + H(+)(out). The catalysed reaction is methotrexate(in) + H(+)(in) = methotrexate(out) + H(+)(out). It catalyses the reaction pemetrexed(in) + H(+)(in) = pemetrexed(out) + H(+)(out). Its function is as follows. Proton-coupled folate symporter that mediates folate absorption using an H(+) gradient as a driving force. Involved in the intestinal absorption of folates at the brush-border membrane of the proximal jejunum, and the transport from blood to cerebrospinal fluid across the choroid plexus. Functions at acidic pH via alternate outward- and inward-open conformation states. Protonation of residues in the outward open state primes the protein for transport. Binding of folate promotes breaking of salt bridge network and subsequent closure of the extracellular gate, leading to the inward-open state and release of protons and folate. Also able to transport antifolate drugs, such as methotrexate and pemetrexed. Also acts as a lower-affinity, pH-independent heme carrier protein and constitutes the main importer of heme in the intestine. Imports heme in the retina and retinal pigment epithelium, in neurons of the hippocampus, in hepatocytes and in the renal epithelial cells. In Xenopus laevis (African clawed frog), this protein is Proton-coupled folate transporter.